A 632-amino-acid chain; its full sequence is Armadillo repeat-containing X-linked protein 2 (632 aa).

At 1–6 (MSRVRD) the chain is on the mitochondrial intermembrane side. A mitochondrion outer membrane (MOM)-targeting sequence region spans residues 1–6 (MSRVRD). Residues 7 to 25 (AGCVAAGIVIGAGAWYCVY) form a helical; Signal-anchor membrane-spanning segment. A mitochondrion outer membrane (MOM)-targeting sequence region spans residues 26 to 40 (KYTRGRDQTKKRMAK). Residues 26–632 (KYTRGRDQTK…VKVIKLVNKF (607 aa)) are Cytoplasmic-facing. Disordered stretches follow at residues 68-124 (GFSP…AGVG), 160-304 (APKV…KVEV), and 335-369 (VPDSEEGESGWTDTESDSDSEPETQRRGRGRRPVA). 2 stretches are compositionally biased toward low complexity: residues 86–120 (EASALDTVGAEAVAPAASSAEAQSGAGSQAQEADG) and 211–241 (VASPTEAAEAPVPATPTGAAAPTGAAESPGT). Residues 336–356 (PDSEEGESGWTDTESDSDSEP) show a composition bias toward acidic residues. 3 ARM repeats span residues 376–416 (PYEI…NNAN), 418–457 (SCNQETIRKLGGLPIIANMINKTDPHIKEKALMAMNNLSE), and 498–537 (ITNDYQHLLVNSIANFFRLLSQGGGKIKVEILKILSNFAE).

It belongs to the eutherian X-chromosome-specific Armcx family. In terms of tissue distribution, expressed at high levels ovary, heart, testis, prostate, brain, spleen and colon. Expressed at very low levels in liver and thymus. Not expressed in peripheral blood leukocytes. Not expressed in pancreas and ovarian carcinomas.

The protein resides in the mitochondrion. It localises to the mitochondrion outer membrane. May regulate the dynamics and distribution of mitochondria in neural cells. This is Armadillo repeat-containing X-linked protein 2 (ARMCX2) from Homo sapiens (Human).